An 89-amino-acid polypeptide reads, in one-letter code: LSM complex subunit LSM3 (89 aa).

A Sm domain is found at 3 to 82 (TPLDLLKLNL…VTLISTPSED (80 aa)).

The protein belongs to the snRNP Sm proteins family. In terms of assembly, component of the heptameric LSM1-LSM7 complex that forms a seven-membered ring structure with a donut shape. The LSm subunits are arranged in the order LSM1, LSM2, LSM3, LSM6, LSM5, LSM7 and LSM4. Except for LSM1, where a C-terminal helix crosses the ring structure to form additional interactions with LSM3 and LSM6, each subunit interacts only with its two neighboring subunits. The LSM1-LSM7 complex interacts with PAT1; within the complex PAT1 has direct interactions with LSM2 and LSM3. The LSM1-LSM7 complex interacts with XRN1. Component of the heptameric LSM2-LSM8 complex that forms a seven-membered ring structure with a donut shape; an RNA strand can pass through the hole in the center of the ring structure. The LSm subunits are arranged in the order LSM8, LSM2, LSM3, LSM6, LSM5, LSM7 and LSM4. Component of the spliceosome U4/U6-U5 tri-snRNP complex composed of the U4, U6 and U5 snRNAs and at least PRP3, PRP4, PRP6, PRP8, PRP18, PRP31, PRP38, SNU13, SNU23, SNU66, SNU114, SPP381, SMB1, SMD1, SMD2, SMD3, SMX2, SMX3, LSM2, LSM3, LSM4, LSM5, LSM6, LSM7, LSM8, BRR2 and DIB1. May be found in a complex comprising LSM2-LSM7 without LSM1 or LSM8; the complex associates with pre-P RNA and snoRNA SNR5.

Its subcellular location is the nucleus. The protein resides in the nucleolus. It is found in the cytoplasm. Functionally, component of LSm protein complexes, which are involved in RNA processing and may function in a chaperone-like manner. Component of the cytoplasmic LSM1-LSM7 complex which is involved in mRNA degradation by activating the decapping step. Together with PAT1, the LSM1-LSM7 complex binds to osmotic stress-activated mRNAs to attenuate the osmotic stress response, probably by limiting ribosome access to the mRNA and consequently translation. Component of the nuclear LSM2-LSM8 complex, which is involved in spliceosome assembly. The LSM2-LSM8 complex plays a role in the biogenesis of the spliceosomal U4/U6-U5 tri-snRNP complex by accelerating PRP24-mediated annealing of U4/U6 di-snRNA. The LSM2-LSM8 complex binds U6 snRNA terminating with a non-cyclic 3' phosphate group. LSM2-LSM8 is probably also involved in degradation of nuclear pre-mRNA by targeting them for decapping. LSM2-LSM8 could be involved in processing of pre-tRNAs, pre-rRNAs and U3 snoRNA, although involvement may be indirect. In a complex that probably contains LSM2-LSM7, but not LSM1 or LSM8, associates with the precursor of the RNA component of RNase P (pre-P RNA) and may be involved in maturing pre-P RNA; the complex also associates with snoRNA SNR5. The chain is LSM complex subunit LSM3 (LSM3) from Saccharomyces cerevisiae (strain ATCC 204508 / S288c) (Baker's yeast).